The sequence spans 714 residues: Testis-expressed protein 13D (714 aa).

2 disordered regions span residues 300 to 419 (GSFP…GCSD) and 431 to 675 (RRCK…PASF). Basic and acidic residues-rich tracts occupy residues 307–320 (SRSH…ERSQ) and 366–378 (GNRE…EGPK). Positions 379 to 392 (RARRMHTLVFRRSH) are enriched in basic residues. Residues 403–416 (TVPQGDSRSYSQEG) show a composition bias toward polar residues. 3 stretches are compositionally biased toward basic and acidic residues: residues 495–505 (CKPEEGPERPQ), 557–567 (CKPEEGPERPQ), and 636–646 (SRSHGVRESPK). Residues 677–706 (VPVNWKCPWCKAINFSWRTACYKCKKACVP) form a RanBP2-type zinc finger.

Belongs to the TEX13 family.

The protein is Testis-expressed protein 13D of Homo sapiens (Human).